Consider the following 487-residue polypeptide: Serine/threonine-protein kinase 4 (487 aa).

An N-acetylmethionine modification is found at methionine 1. Phosphothreonine is present on threonine 3. Positions 30–281 (FDVLEKLGEG…ATQLLQHPFV (252 aa)) constitute a Protein kinase domain. ATP is bound by residues 36–44 (LGEGSYGSV) and lysine 59. The active-site Proton acceptor is aspartate 149. Threonine 183 is modified (phosphothreonine; by autocatalysis). The residue at position 265 (serine 265) is a Phosphoserine. Positions 290–310 (LRDLINEAMDVKLKRQESQQR) form a coiled coil. The segment covering 303 to 312 (KRQESQQREV) has biased composition (basic and acidic residues). The tract at residues 303–332 (KRQESQQREVDQDDEENSEEDEMDSGTMVR) is disordered. Acidic residues predominate over residues 313 to 326 (DQDDEENSEEDEMD). Serine 320 carries the phosphoserine modification. Phosphothreonine is present on residues threonine 340 and threonine 367. Residue threonine 387 is modified to Phosphothreonine; by PKB/AKT1. A phosphoserine mark is found at serine 410 and serine 414. Tyrosine 433 is subject to Phosphotyrosine. Residues 433–480 (YEFLKSWTVEDLQKRLLALDPMMEQEIEEIRQKYQSKRQPILDAIEAK) enclose the SARAH domain.

It belongs to the protein kinase superfamily. STE Ser/Thr protein kinase family. STE20 subfamily. Homodimer; mediated via the coiled-coil region. Interacts with NORE1, which inhibits autoactivation. Interacts with and stabilizes SAV1. Interacts with RASSF1. Interacts with FOXO3. Interacts with RASSF2 (via SARAH domain). Interacts with AR, PKB/AKT1, TNNI3 and SIRT1. Interacts with DLG5 (via PDZ domain 3). Interacts with MARK3 in the presence of DLG5. Interacts with SCRIB in the presence of DLG5. It depends on Mg(2+) as a cofactor. In terms of processing, autophosphorylated on serine and threonine residues. Phosphorylation at Thr-387 by PKB/AKT1, leads to inhibition of its: kinase activity, nuclear translocation and autophosphorylation at Thr-183. It also diminishes its cleavage by caspases and its ability to phosphorylate FOXO3. Post-translationally, proteolytically cleaved by caspase-3 during apoptosis at Asp-326 and Asp-349 resulting in a 37 kDa or a 39 kDa subunit respectively. The 39 kDa subunit is further cleaved into the 37 kDa form. Proteolytic cleavage results in kinase activation and nuclear translocation of the truncated form (MST1/N). It is less likely that cleavage at Asp-349 is a prerequisite for activation as this site is not conserved in the murine ortholog. Expressed in prostate cancer and levels increase from the normal to the malignant state (at protein level). Ubiquitously expressed.

The protein localises to the cytoplasm. It localises to the nucleus. The catalysed reaction is L-seryl-[protein] + ATP = O-phospho-L-seryl-[protein] + ADP + H(+). It catalyses the reaction L-threonyl-[protein] + ATP = O-phospho-L-threonyl-[protein] + ADP + H(+). With respect to regulation, inhibited by the C-terminal non-catalytic region. Activated by caspase-cleavage. Full activation also requires homodimerization and autophosphorylation of Thr-183. Activated by RASSF1 which acts by preventing its dephosphorylation. In terms of biological role, stress-activated, pro-apoptotic kinase which, following caspase-cleavage, enters the nucleus and induces chromatin condensation followed by internucleosomal DNA fragmentation. Key component of the Hippo signaling pathway which plays a pivotal role in organ size control and tumor suppression by restricting proliferation and promoting apoptosis. The core of this pathway is composed of a kinase cascade wherein STK3/MST2 and STK4/MST1, in complex with its regulatory protein SAV1, phosphorylates and activates LATS1/2 in complex with its regulatory protein MOB1, which in turn phosphorylates and inactivates YAP1 oncoprotein and WWTR1/TAZ. Phosphorylation of YAP1 by LATS2 inhibits its translocation into the nucleus to regulate cellular genes important for cell proliferation, cell death, and cell migration. STK3/MST2 and STK4/MST1 are required to repress proliferation of mature hepatocytes, to prevent activation of facultative adult liver stem cells (oval cells), and to inhibit tumor formation. Phosphorylates 'Ser-14' of histone H2B (H2BS14ph) during apoptosis. Phosphorylates FOXO3 upon oxidative stress, which results in its nuclear translocation and cell death initiation. Phosphorylates MOBKL1A, MOBKL1B and RASSF2. Phosphorylates TNNI3 (cardiac Tn-I) and alters its binding affinity to TNNC1 (cardiac Tn-C) and TNNT2 (cardiac Tn-T). Phosphorylates FOXO1 on 'Ser-212' and regulates its activation and stimulates transcription of PMAIP1 in a FOXO1-dependent manner. Phosphorylates SIRT1 and inhibits SIRT1-mediated p53/TP53 deacetylation, thereby promoting p53/TP53 dependent transcription and apoptosis upon DNA damage. Acts as an inhibitor of PKB/AKT1. Phosphorylates AR on 'Ser-650' and suppresses its activity by intersecting with PKB/AKT1 signaling and antagonizing formation of AR-chromatin complexes. The polypeptide is Serine/threonine-protein kinase 4 (Homo sapiens (Human)).